We begin with the raw amino-acid sequence, 314 residues long: Ribosome maturation factor RimP (314 aa).

Disordered regions lie at residues Met-1–Ser-20, Pro-152–Glu-176, and Ala-206–Lys-314. The span at Pro-10 to Leu-19 shows a compositional bias: polar residues. Residues Asp-215–Glu-227 show a composition bias toward acidic residues. Residues Pro-247–Ile-256 show a composition bias toward polar residues. Composition is skewed to basic and acidic residues over residues Thr-270–Glu-279 and Ser-303–Lys-314.

This sequence belongs to the RimP family.

The protein localises to the cytoplasm. Its function is as follows. Required for maturation of 30S ribosomal subunits. This chain is Ribosome maturation factor RimP, found in Beijerinckia indica subsp. indica (strain ATCC 9039 / DSM 1715 / NCIMB 8712).